The primary structure comprises 165 residues: Protein SprT (165 aa).

The SprT-like domain occupies 20–163; sequence EKLAQANLKL…RCVHCGEQLV (144 aa). Residue H78 coordinates Zn(2+). Residue E79 is part of the active site. H82 provides a ligand contact to Zn(2+).

The protein belongs to the SprT family. It depends on Zn(2+) as a cofactor.

The protein localises to the cytoplasm. This chain is Protein SprT, found in Escherichia coli O127:H6 (strain E2348/69 / EPEC).